Here is a 372-residue protein sequence, read N- to C-terminus: 4-hydroxy-3-methylbut-2-en-1-yl diphosphate synthase (flavodoxin) (372 aa).

C270, C273, C305, and E312 together coordinate [4Fe-4S] cluster.

Belongs to the IspG family. The cofactor is [4Fe-4S] cluster.

It carries out the reaction (2E)-4-hydroxy-3-methylbut-2-enyl diphosphate + oxidized [flavodoxin] + H2O + 2 H(+) = 2-C-methyl-D-erythritol 2,4-cyclic diphosphate + reduced [flavodoxin]. The protein operates within isoprenoid biosynthesis; isopentenyl diphosphate biosynthesis via DXP pathway; isopentenyl diphosphate from 1-deoxy-D-xylulose 5-phosphate: step 5/6. In terms of biological role, converts 2C-methyl-D-erythritol 2,4-cyclodiphosphate (ME-2,4cPP) into 1-hydroxy-2-methyl-2-(E)-butenyl 4-diphosphate. The sequence is that of 4-hydroxy-3-methylbut-2-en-1-yl diphosphate synthase (flavodoxin) from Escherichia coli O8 (strain IAI1).